The sequence spans 126 residues: Tachykinin-3 (126 aa).

The N-terminal stretch at 1–20 (MRSTLLFAVILALSSARSLG) is a signal peptide. The propeptide occupies 21–83 (AVCEESQEQV…VGPKESPLPQ (63 aa)). M95 carries the post-translational modification Methionine amide. A propeptide spanning residues 99-126 (NLQPDTPVDINQENIPSFGTFKYPPSVE) is cleaved from the precursor. Residues 102–126 (PDTPVDINQENIPSFGTFKYPPSVE) form a disordered region.

This sequence belongs to the tachykinin family.

The protein resides in the secreted. Functionally, tachykinins are active peptides which excite neurons, evoke behavioral responses, are potent vasodilators and secretagogues, and contract (directly or indirectly) many smooth muscles. Is a critical central regulator of gonadal function. This Bos taurus (Bovine) protein is Tachykinin-3 (TAC3).